A 461-amino-acid chain; its full sequence is Kynurenine 3-monooxygenase (461 aa).

FAD-binding positions include 17-18 (LA), 37-39 (ERR), and Ala56. L-kynurenine is bound by residues Arg84 and Tyr98. Residues Arg111, Leu135, Asp311, and 324 to 325 (MN) each bind FAD. L-kynurenine contacts are provided by Asn369 and Tyr404.

It belongs to the aromatic-ring hydroxylase family. KMO subfamily. FAD is required as a cofactor.

The enzyme catalyses L-kynurenine + NADPH + O2 + H(+) = 3-hydroxy-L-kynurenine + NADP(+) + H2O. It participates in cofactor biosynthesis; NAD(+) biosynthesis; quinolinate from L-kynurenine: step 1/3. The protein operates within siderophore biosynthesis; quinolobactin biosynthesis. Catalyzes the hydroxylation of L-kynurenine (L-Kyn) to form 3-hydroxy-L-kynurenine (L-3OHKyn). Probably required for the synthesis of quinolinic acid and the siderophore quinolobactin. The protein is Kynurenine 3-monooxygenase of Pseudomonas fluorescens.